Here is a 409-residue protein sequence, read N- to C-terminus: Cdc42 effector protein 1 (409 aa).

Residues 1–29 (MPGPQGGTGAPTMSLGKLSPVGWVSSSHG) are disordered. Ser-19 and Ser-27 each carry phosphoserine. Thr-34 bears the Phosphothreonine mark. Residues 38 to 52 (ISPPLGDFRHTMHVG) form the CRIB domain. Phosphoserine is present on Ser-39. Arg-53 is modified (omega-N-methylarginine). 6 positions are modified to phosphoserine: Ser-65, Ser-77, Ser-101, Ser-113, Ser-121, and Ser-139. Residues 167–189 (PRVEKHSNRDRDRDPDHSQDREQ) are compositionally biased toward basic and acidic residues. Residues 167 to 203 (PRVEKHSNRDRDRDPDHSQDREQSSFPSEPTPNPELR) are disordered. Residues Ser-191, Ser-205, Ser-207, and Ser-210 each carry the phosphoserine modification. Tandem repeats lie at residues 235-241 (PAAETPV), 242-248 (PTANPPA), and 255-261 (PTAKPPA). The 3 X 7 AA tandem repeats of [PT]-[AT]-A-[ENT]-[PT]-[PTS]-[AG] stretch occupies residues 235 to 284 (PAAETPVPTANPPAPAANPAPTAKPPAHAITTLDAVTSLPASAVTSLPAP). 2 disordered regions span residues 237 to 260 (AETP…AKPP) and 282 to 329 (PAPA…FDRH). Positions 243-258 (TANPPAPAANPAPTAK) are enriched in pro residues. Low complexity predominate over residues 282–291 (PAPAAASSPS). Phosphoserine is present on residues Ser-312, Ser-332, Ser-368, and Ser-371.

This sequence belongs to the BORG/CEP family. As to quaternary structure, interacts with RHOQ and CDC42, in a GTP-dependent manner.

The protein localises to the endomembrane system. It localises to the cytoplasm. Its subcellular location is the cytoskeleton. Its function is as follows. Probably involved in the organization of the actin cytoskeleton. Induced membrane extensions in fibroblasts. In Mus musculus (Mouse), this protein is Cdc42 effector protein 1 (Cdc42ep1).